The sequence spans 365 residues: Deoxyguanosinetriphosphate triphosphohydrolase-like protein (365 aa).

One can recognise an HD domain in the interval 52–187 (RLTHSIEVSQ…VDHADEIAYV (136 aa)).

Belongs to the dGTPase family. Type 2 subfamily.

This chain is Deoxyguanosinetriphosphate triphosphohydrolase-like protein, found in Wolinella succinogenes (strain ATCC 29543 / DSM 1740 / CCUG 13145 / JCM 31913 / LMG 7466 / NCTC 11488 / FDC 602W) (Vibrio succinogenes).